Reading from the N-terminus, the 347-residue chain is Ribosomal RNA large subunit methyltransferase M (347 aa).

S-adenosyl-L-methionine-binding positions include serine 184, 217–220, aspartate 236, aspartate 256, and aspartate 272; that span reads APGG. The active-site Proton acceptor is lysine 301.

This sequence belongs to the class I-like SAM-binding methyltransferase superfamily. RNA methyltransferase RlmE family. RlmM subfamily. Monomer.

It is found in the cytoplasm. The enzyme catalyses cytidine(2498) in 23S rRNA + S-adenosyl-L-methionine = 2'-O-methylcytidine(2498) in 23S rRNA + S-adenosyl-L-homocysteine + H(+). In terms of biological role, catalyzes the 2'-O-methylation at nucleotide C2498 in 23S rRNA. The sequence is that of Ribosomal RNA large subunit methyltransferase M from Xanthomonas axonopodis pv. citri (strain 306).